A 568-amino-acid polypeptide reads, in one-letter code: Potassium-transporting ATPase potassium-binding subunit (568 aa).

Helical transmembrane passes span 3–23, 64–84, 133–153, 179–199, 255–275, 281–301, 375–395, 418–438, 497–517, and 535–555; these read TEIL…YPLG, FLKA…VLLV, FVIM…MAGV, ILLP…TPMG, MVEC…LGFY, LGYS…FINV, FGGV…AVFI, IATF…AISS, IVLI…AGLL, and VTFA…SFFP.

Belongs to the KdpA family. The system is composed of three essential subunits: KdpA, KdpB and KdpC.

Its subcellular location is the cell inner membrane. Part of the high-affinity ATP-driven potassium transport (or Kdp) system, which catalyzes the hydrolysis of ATP coupled with the electrogenic transport of potassium into the cytoplasm. This subunit binds the periplasmic potassium ions and delivers the ions to the membrane domain of KdpB through an intramembrane tunnel. This chain is Potassium-transporting ATPase potassium-binding subunit, found in Bacteroides fragilis (strain ATCC 25285 / DSM 2151 / CCUG 4856 / JCM 11019 / LMG 10263 / NCTC 9343 / Onslow / VPI 2553 / EN-2).